We begin with the raw amino-acid sequence, 279 residues long: Methyltransferase ausD (279 aa).

Residues 124–125, 152–153, and Arg244 contribute to the S-adenosyl-L-methionine site; these read DL and DI.

This sequence belongs to the class I-like SAM-binding methyltransferase superfamily. Homodimer.

It participates in secondary metabolite biosynthesis; terpenoid biosynthesis. Methyltransferase; part of the gene cluster that mediates the biosynthesis of calidodehydroaustin, a fungal meroterpenoid. The first step of the pathway is the synthesis of 3,5-dimethylorsellinic acid by the polyketide synthase ausA. 3,5-dimethylorsellinic acid is then prenylated by the polyprenyl transferase ausN. Further epoxidation by the FAD-dependent monooxygenase ausM and cyclization by the probable terpene cyclase ausL lead to the formation of protoaustinoid A. Protoaustinoid A is then oxidized to spiro-lactone preaustinoid A3 by the combined action of the FAD-binding monooxygenases ausB and ausC, and the dioxygenase ausE. Acid-catalyzed keto-rearrangement and ring contraction of the tetraketide portion of preaustinoid A3 by ausJ lead to the formation of preaustinoid A4. The aldo-keto reductase ausK, with the help of ausH, is involved in the next step by transforming preaustinoid A4 into isoaustinone which is in turn hydroxylated by the P450 monooxygenase ausI to form austinolide. The cytochrome P450 monooxygenase ausG modifies austinolide to austinol. Austinol is further acetylated to austin by the O-acetyltransferase ausP, which spontaneously changes to dehydroaustin. The cytochrome P450 monooxygenase ausR then converts dehydroaustin is into 7-dehydrodehydroaustin. The hydroxylation catalyzed by ausR permits the O-acetyltransferase ausQ to add an additional acetyl group to the molecule, leading to the formation of acetoxydehydroaustin. The short chain dehydrogenase ausT catalyzes the reduction of the double bond present between carbon atoms 1 and 2 to convert 7-dehydrodehydroaustin into 1,2-dihydro-7-hydroxydehydroaustin. AusQ catalyzes not only an acetylation reaction but also the addition of the PKS ausV diketide product to 1,2-dihydro-7-hydroxydehydroaustin, forming precalidodehydroaustin. Finally, the iron/alpha-ketoglutarate-dependent dioxygenase converts precalidodehydroaustin into calidodehydroaustin. In Aspergillus calidoustus, this protein is Methyltransferase ausD.